A 451-amino-acid polypeptide reads, in one-letter code: 3-phosphoshikimate 1-carboxyvinyltransferase (451 aa).

3-phosphoshikimate is bound by residues lysine 30, serine 31, and arginine 35. Lysine 30 serves as a coordination point for phosphoenolpyruvate. Phosphoenolpyruvate is bound by residues glycine 103 and arginine 131. 4 residues coordinate 3-phosphoshikimate: serine 176, glutamine 178, aspartate 329, and lysine 356. Glutamine 178 contributes to the phosphoenolpyruvate binding site. The active-site Proton acceptor is aspartate 329. Residues arginine 360 and arginine 404 each contribute to the phosphoenolpyruvate site.

It belongs to the EPSP synthase family. In terms of assembly, monomer.

It is found in the cytoplasm. The catalysed reaction is 3-phosphoshikimate + phosphoenolpyruvate = 5-O-(1-carboxyvinyl)-3-phosphoshikimate + phosphate. Its pathway is metabolic intermediate biosynthesis; chorismate biosynthesis; chorismate from D-erythrose 4-phosphate and phosphoenolpyruvate: step 6/7. In terms of biological role, catalyzes the transfer of the enolpyruvyl moiety of phosphoenolpyruvate (PEP) to the 5-hydroxyl of shikimate-3-phosphate (S3P) to produce enolpyruvyl shikimate-3-phosphate and inorganic phosphate. The sequence is that of 3-phosphoshikimate 1-carboxyvinyltransferase from Parvibaculum lavamentivorans (strain DS-1 / DSM 13023 / NCIMB 13966).